The chain runs to 183 residues: Photosystem I assembly protein Ycf4 (183 aa).

Transmembrane regions (helical) follow at residues 21–43 and 63–85; these read YIWG…SSYL and LVMC…LILW.

The protein belongs to the Ycf4 family.

The protein resides in the plastid. The protein localises to the chloroplast thylakoid membrane. Functionally, seems to be required for the assembly of the photosystem I complex. The chain is Photosystem I assembly protein Ycf4 from Chlorella vulgaris (Green alga).